The primary structure comprises 241 residues: Queuine tRNA-ribosyltransferase-like protein (241 aa).

The protein belongs to the queuine tRNA-ribosyltransferase family.

The protein is Queuine tRNA-ribosyltransferase-like protein of Plasmodium falciparum.